Reading from the N-terminus, the 176-residue chain is ATP synthase subunit b (176 aa).

Residues 18-38 (GVEWGTVIVTVITFAILLALL) traverse the membrane as a helical segment.

This sequence belongs to the ATPase B chain family. F-type ATPases have 2 components, F(1) - the catalytic core - and F(0) - the membrane proton channel. F(1) has five subunits: alpha(3), beta(3), gamma(1), delta(1), epsilon(1). F(0) has three main subunits: a(1), b(2) and c(10-14). The alpha and beta chains form an alternating ring which encloses part of the gamma chain. F(1) is attached to F(0) by a central stalk formed by the gamma and epsilon chains, while a peripheral stalk is formed by the delta and b chains.

The protein localises to the cell membrane. F(1)F(0) ATP synthase produces ATP from ADP in the presence of a proton or sodium gradient. F-type ATPases consist of two structural domains, F(1) containing the extramembraneous catalytic core and F(0) containing the membrane proton channel, linked together by a central stalk and a peripheral stalk. During catalysis, ATP synthesis in the catalytic domain of F(1) is coupled via a rotary mechanism of the central stalk subunits to proton translocation. In terms of biological role, component of the F(0) channel, it forms part of the peripheral stalk, linking F(1) to F(0). In Staphylococcus haemolyticus (strain JCSC1435), this protein is ATP synthase subunit b.